A 101-amino-acid chain; its full sequence is NAD(P)H-quinone oxidoreductase subunit 4L, chloroplastic (101 aa).

The next 3 membrane-spanning stretches (helical) occupy residues 2-22 (MLEH…YGLI), 32-52 (MCLE…SDFF), and 61-81 (IFSI…LAIV).

The protein belongs to the complex I subunit 4L family. As to quaternary structure, NDH is composed of at least 16 different subunits, 5 of which are encoded in the nucleus.

Its subcellular location is the plastid. The protein resides in the chloroplast thylakoid membrane. It carries out the reaction a plastoquinone + NADH + (n+1) H(+)(in) = a plastoquinol + NAD(+) + n H(+)(out). It catalyses the reaction a plastoquinone + NADPH + (n+1) H(+)(in) = a plastoquinol + NADP(+) + n H(+)(out). Its function is as follows. NDH shuttles electrons from NAD(P)H:plastoquinone, via FMN and iron-sulfur (Fe-S) centers, to quinones in the photosynthetic chain and possibly in a chloroplast respiratory chain. The immediate electron acceptor for the enzyme in this species is believed to be plastoquinone. Couples the redox reaction to proton translocation, and thus conserves the redox energy in a proton gradient. In Helianthus annuus (Common sunflower), this protein is NAD(P)H-quinone oxidoreductase subunit 4L, chloroplastic.